Here is a 68-residue protein sequence, read N- to C-terminus: Protein SlyX homolog (68 aa).

The protein belongs to the SlyX family.

The polypeptide is Protein SlyX homolog (Pseudomonas entomophila (strain L48)).